The following is a 378-amino-acid chain: MEYKNYTAYQHGSEPAVGVLITNLGTPDAPTKEALRPYLKEFLMDPRVVEPPPARWLWKLILNLIILNTRPAKSAEAYQEVWGKYGDGSPLLDISNRQLMDIEEKVRAHFSGRVEFALGMRYGNPSIASALKSLQDRNVQRLIVVPLYPQYAGATTASTFDAVSAELQQWRWIPELRFVRNYHKHPGYIKALANSIREHQAEHGKPDLLVMSYHGIPQRYFDNGDPYPCECRATSRLVAEELGLNSDEYMVTFQSLFGKEEWVKPYTDATLKSLPDKGVKHLQVICPGFSADCLETIEEIDQENREYFEEAGGEKFSYIPALNDRDDHTTALTQIILQQTRGWPERDGFDAEADKEERALQAKLADQLEKKLSDEFGQ.

Histidine 214 and glutamate 295 together coordinate Fe cation.

This sequence belongs to the ferrochelatase family.

The protein resides in the cytoplasm. The catalysed reaction is heme b + 2 H(+) = protoporphyrin IX + Fe(2+). It participates in porphyrin-containing compound metabolism; protoheme biosynthesis; protoheme from protoporphyrin-IX: step 1/1. Its function is as follows. Catalyzes the ferrous insertion into protoporphyrin IX. This chain is Ferrochelatase, found in Hydrogenovibrio crunogenus (strain DSM 25203 / XCL-2) (Thiomicrospira crunogena).